The following is a 424-amino-acid chain: Dihydroorotase (424 aa).

Zn(2+) contacts are provided by H58 and H60. Residues 60–62 (HLR) and N92 contribute to the substrate site. Zn(2+)-binding residues include D150, H177, and H230. N276 is a binding site for substrate. A Zn(2+)-binding site is contributed by D303. Residue D303 is part of the active site. Residues H307 and 321 to 322 (FG) contribute to the substrate site.

Belongs to the metallo-dependent hydrolases superfamily. DHOase family. Class I DHOase subfamily. Zn(2+) serves as cofactor.

It carries out the reaction (S)-dihydroorotate + H2O = N-carbamoyl-L-aspartate + H(+). It functions in the pathway pyrimidine metabolism; UMP biosynthesis via de novo pathway; (S)-dihydroorotate from bicarbonate: step 3/3. Its function is as follows. Catalyzes the reversible cyclization of carbamoyl aspartate to dihydroorotate. This chain is Dihydroorotase, found in Staphylococcus aureus (strain MRSA252).